The primary structure comprises 571 residues: Urease subunit alpha (571 aa).

A Urease domain is found at 134 to 571 (GAIDTHIHFI…LPMAQRYFLF (438 aa)). Positions 139, 141, and 222 each coordinate Ni(2+). Position 222 is an N6-carboxylysine (lysine 222). Histidine 224 lines the substrate pocket. Ni(2+)-binding residues include histidine 251 and histidine 277. Histidine 325 functions as the Proton donor in the catalytic mechanism. Residue aspartate 365 coordinates Ni(2+).

This sequence belongs to the metallo-dependent hydrolases superfamily. Urease alpha subunit family. As to quaternary structure, heterotrimer of UreA (gamma), UreB (beta) and UreC (alpha) subunits. Three heterotrimers associate to form the active enzyme. Ni cation serves as cofactor. Carboxylation allows a single lysine to coordinate two nickel ions.

The protein localises to the cytoplasm. It catalyses the reaction urea + 2 H2O + H(+) = hydrogencarbonate + 2 NH4(+). It functions in the pathway nitrogen metabolism; urea degradation; CO(2) and NH(3) from urea (urease route): step 1/1. The protein is Urease subunit alpha of Bordetella bronchiseptica (strain ATCC BAA-588 / NCTC 13252 / RB50) (Alcaligenes bronchisepticus).